The sequence spans 179 residues: Large ribosomal subunit protein uL5 (179 aa).

The protein belongs to the universal ribosomal protein uL5 family. Part of the 50S ribosomal subunit; part of the 5S rRNA/L5/L18/L25 subcomplex. Contacts the 5S rRNA and the P site tRNA. Forms a bridge to the 30S subunit in the 70S ribosome.

Its function is as follows. This is one of the proteins that bind and probably mediate the attachment of the 5S RNA into the large ribosomal subunit, where it forms part of the central protuberance. In the 70S ribosome it contacts protein S13 of the 30S subunit (bridge B1b), connecting the 2 subunits; this bridge is implicated in subunit movement. Contacts the P site tRNA; the 5S rRNA and some of its associated proteins might help stabilize positioning of ribosome-bound tRNAs. The protein is Large ribosomal subunit protein uL5 of Francisella philomiragia subsp. philomiragia (strain ATCC 25017 / CCUG 19701 / FSC 153 / O#319-036).